A 261-amino-acid polypeptide reads, in one-letter code: 7beta-hydroxysteroid dehydrogenase (261 aa).

NADP(+) is bound by residues 17-21 (TEGIG), 40-41 (RR), and 66-67 (DL). Tyr156 serves as the catalytic Proton acceptor.

It belongs to the short-chain dehydrogenases/reductases (SDR) family. In terms of assembly, homodimer.

The enzyme catalyses a 7beta-hydroxysteroid + NADP(+) = a 7-oxosteroid + NADPH + H(+). It catalyses the reaction ursocholate + NADP(+) = 3alpha,12alpha-dihydroxy-7-oxo-5beta-cholanate + NADPH + H(+). The catalysed reaction is 7-oxolithocholate + NADPH + H(+) = ursodeoxycholate + NADP(+). It carries out the reaction 3alpha,7beta-dihydroxy-12-oxo-5beta-cholan-24-oate + NADP(+) = 7,12-dioxo-lithocholate + NADPH + H(+). The enzyme catalyses 7beta-hydroxy-3,12-dioxo-5beta-cholan-24-oate + NADP(+) = dehydrocholate + NADPH + H(+). 7beta-hydroxysteroid dehydrogenase that catalyzes the reduction of the 7-oxo group of 7-oxosteroids, such as 3alpha,12alpha-dihydroxy-7-oxo-5beta-cholanate, 7-oxolithocholate, 7,12-dioxo-lithocholate and dehydrocholate, to the corresponding 7beta-hydroxysteroids. Is also able to catalyze the reverse oxidation reactions. Together with 7alpha-HSDH encoded in the adjacent gene, is likely involved in the epimerization of the hydroxy group at C-7 of primary bile acids through 7-keto bile acid intermediates. The protein is 7beta-hydroxysteroid dehydrogenase of Clostridium sardiniense (Clostridium absonum).